We begin with the raw amino-acid sequence, 927 residues long: Sodium/calcium exchanger 3 (927 aa).

An N-terminal signal peptide occupies residues 1–30 (MAWLRLQPLTSAFLHFGLVTFVLFLNGLRA). At 31–73 (EAGDLRDVPSAGQNNESCSGSSDCKEGVILPIWYPENPSLGDK) the chain is on the extracellular side. N45 is a glycosylation site (N-linked (GlcNAc...) asparagine). Residues 74–94 (IARVIVYFVALIYMFLGVSII) traverse the membrane as a helical segment. The Cytoplasmic portion of the chain corresponds to 95 to 147 (ADRFMASIEVITSQEREVTIKKPNGETSTTTIRVWNETVSNLTLMALGSSAPE). The stretch at 140–180 (ALGSSAPEILLSLIEVCGHGFIAGDLGPSTIVGSAAFNMFI) is one Alpha-1 repeat. The chain crosses the membrane as a helical span at residues 148–168 (ILLSLIEVCGHGFIAGDLGPS). Position 169 (T169) is a topological domain, extracellular. A helical transmembrane segment spans residues 170–190 (IVGSAAFNMFIIIGICVYVIP). Residues 191–202 (DGETRKIKHLRV) are Cytoplasmic-facing. The helical transmembrane segment at 203–223 (FFVTAAWSVFAYIWLYMILAV) threads the bilayer. At 224 to 230 (FSPGVVQ) the chain is on the extracellular side. A helical transmembrane segment spans residues 231-251 (VWEGLLTLFFFPVCVLLAWVA). Topologically, residues 252–726 (DKRLLFYKYM…DESGEERLPS (475 aa)) are cytoplasmic. The interval 253–272 (KRLLFYKYMHKRYRTDKHRG) is putative calmodulin-binding region. 2 Calx-beta domains span residues 386 to 485 (VHTD…VRLS) and 519 to 619 (ATVT…IALG). Residues E409, D445, D470, D471, I473, E475, E478, D525, D526, D527, E543, D579, E606, E607, and E672 each coordinate Ca(2+). The helical transmembrane segment at 727-747 (CFDYVMHFLTVFWKVLFACVP) threads the bilayer. The Extracellular segment spans residues 748-754 (PTEYCHG). The helical transmembrane segment at 755–775 (WACFVVSILIIGMLTAIIGDL) threads the bilayer. The Cytoplasmic segment spans residues 776–778 (ASH). Residues 779–799 (FGCTIGLKDSVTAVVFVAFGT) form a helical membrane-spanning segment. One copy of the Alpha-2 repeat lies at 796 to 832 (AFGTSVPDTFASKAAALQDVYADASIGNVTGSNAVNV). Residues 800–828 (SVPDTFASKAAALQDVYADASIGNVTGSN) lie on the Extracellular side of the membrane. N823 is a glycosylation site (N-linked (GlcNAc...) asparagine). The chain crosses the membrane as a helical span at residues 829 to 849 (AVNVFLGIGLAWSVAAIYWAM). The Cytoplasmic segment spans residues 850–860 (QGQEFHVSAGT). Residues 861–881 (LAFSVTLFTIFAFVCLSVLLY) traverse the membrane as a helical segment. Over 882–903 (RRRPHLGGELGGPRGCKLATTW) the chain is Extracellular. A helical transmembrane segment spans residues 904–924 (LFVSLWLLYVLFATLEAYCYI). Topologically, residues 925 to 927 (KGF) are cytoplasmic.

This sequence belongs to the Ca(2+):cation antiporter (CaCA) (TC 2.A.19) family. SLC8 subfamily. As to quaternary structure, interacts with AKAP1. As to expression, detected in neurons in brain cortex and hippocampus. Detected in pyramidal cell bodies and processes, in granule cells and interneurons in the CA1 and CA3 region of the hippocampus. Detected on astrocyte processes in brain cortex. Detected on endothelial cells in hippocampus capillaries (at protein level). Restricted to brain and skeletal muscle.

The protein localises to the cell membrane. Its subcellular location is the perikaryon. It is found in the cell projection. It localises to the dendrite. The protein resides in the dendritic spine. The protein localises to the sarcolemma. Its subcellular location is the cytoplasm. It is found in the sarcoplasm. It localises to the cell junction. The protein resides in the mitochondrion outer membrane. The protein localises to the endoplasmic reticulum membrane. Its subcellular location is the perinuclear region. It carries out the reaction Ca(2+)(in) + 3 Na(+)(out) = Ca(2+)(out) + 3 Na(+)(in). Calcium transport is down-regulated by Na(+) and stimulated by Ca(2+). Mediates the electrogenic exchange of Ca(2+) against Na(+) ions across the cell membrane, and thereby contributes to the regulation of cytoplasmic Ca(2+) levels and Ca(2+)-dependent cellular processes. Contributes to cellular Ca(2+) homeostasis in excitable cells, both in muscle and in brain. In a first phase, voltage-gated channels mediate the rapid increase of cytoplasmic Ca(2+) levels due to release of Ca(2+) stores from the endoplasmic reticulum. SLC8A3 mediates the export of Ca(2+) from the cell during the next phase, so that cytoplasmic Ca(2+) levels rapidly return to baseline. Contributes to Ca(2+) transport during excitation-contraction coupling in muscle. In neurons, contributes to the rapid decrease of cytoplasmic Ca(2+) levels back to baseline after neuronal activation, and thereby contributes to modulate synaptic plasticity, learning and memory. Required for normal oligodendrocyte differentiation and for normal myelination. Mediates Ca(2+) efflux from mitochondria and contributes to mitochondrial Ca(2+) ion homeostasis. The protein is Sodium/calcium exchanger 3 (Slc8a3) of Rattus norvegicus (Rat).